An 878-amino-acid polypeptide reads, in one-letter code: Aconitate hydratase A (878 aa).

3 residues coordinate [4Fe-4S] cluster: cysteine 426, cysteine 492, and cysteine 495.

Belongs to the aconitase/IPM isomerase family. As to quaternary structure, monomer. It depends on [4Fe-4S] cluster as a cofactor.

It carries out the reaction citrate = D-threo-isocitrate. The catalysed reaction is (2S,3R)-3-hydroxybutane-1,2,3-tricarboxylate = 2-methyl-cis-aconitate + H2O. Its pathway is carbohydrate metabolism; tricarboxylic acid cycle; isocitrate from oxaloacetate: step 2/2. It participates in organic acid metabolism; propanoate degradation. In terms of biological role, involved in the catabolism of short chain fatty acids (SCFA) via the tricarboxylic acid (TCA)(acetyl degradation route) and probably the 2-methylcitrate cycle I (propionate degradation route). Catalyzes the reversible isomerization of citrate to isocitrate via cis-aconitate. Could catalyze the hydration of 2-methyl-cis-aconitate to yield (2R,3S)-2-methylisocitrate. The apo form of AcnA functions as a RNA-binding regulatory protein. The polypeptide is Aconitate hydratase A (acnA) (Rickettsia typhi (strain ATCC VR-144 / Wilmington)).